A 233-amino-acid chain; its full sequence is Large ribosomal subunit protein mL67 (233 aa).

The interval 214-233 (RQQAQQSEQQSQSELESQTA) is disordered. The segment covering 215-233 (QQAQQSEQQSQSELESQTA) has biased composition (low complexity).

This sequence belongs to the mitochondrion-specific ribosomal protein mL67 family.

Its subcellular location is the nucleus. It is found in the mitochondrion. Transcription factor involved in regulation of RNA polymerase II-dependent transcription. Also involved in regulation of mitochondrial DNA recombination, maintenance and repair, and generation of homoplasmic cells. The sequence is that of Large ribosomal subunit protein mL67 (MHR1) from Debaryomyces hansenii (strain ATCC 36239 / CBS 767 / BCRC 21394 / JCM 1990 / NBRC 0083 / IGC 2968) (Yeast).